A 398-amino-acid polypeptide reads, in one-letter code: Lysophosphatidylserine lipase ABHD12 (398 aa).

Residues Met-1–Cys-15 show a composition bias toward basic and acidic residues. Residues Met-1–Gly-24 form a disordered region. At Met-1–Lys-74 the chain is on the cytoplasmic side. The chain crosses the membrane as a helical span at residues Ile-75–Gly-95. Over Ile-96–His-398 the chain is Extracellular. N-linked (GlcNAc...) asparagine glycosylation occurs at Asn-123. Ser-246 (nucleophile) is an active-site residue. Catalysis depends on charge relay system residues Asp-333 and His-372.

Belongs to the serine esterase family.

The protein resides in the endoplasmic reticulum membrane. The enzyme catalyses 1-(9Z-octadecenoyl)-sn-glycero-3-phospho-L-serine + H2O = sn-glycero-3-phospho-L-serine + (9Z)-octadecenoate + H(+). The catalysed reaction is 1-(9Z-octadecenoyl)-sn-glycero-3-phospho-(1'-sn-glycerol) + H2O = sn-glycero-3-phospho-(1'-sn-glycerol) + (9Z)-octadecenoate + H(+). It catalyses the reaction 1-(9Z-octadecenoyl)-sn-glycero-3-phospho-(1D-myo-inositol) + H2O = sn-glycero-3-phospho-1D-myo-inositol + (9Z)-octadecenoate + H(+). It carries out the reaction 1-(9Z-octadecenoyl)-sn-glycero-3-phosphoethanolamine + H2O = sn-glycero-3-phosphoethanolamine + (9Z)-octadecenoate + H(+). The enzyme catalyses 1-(9Z-octadecenoyl)-sn-glycero-3-phosphocholine + H2O = 1-(9Z-octadecenoyl)-sn-glycerol + phosphocholine + H(+). The catalysed reaction is 2-(9Z-octadecenoyl)-glycerol + H2O = glycerol + (9Z)-octadecenoate + H(+). It catalyses the reaction 1-hexadecanoyl-sn-glycero-3-phospho-L-serine + H2O = sn-glycero-3-phospho-L-serine + hexadecanoate + H(+). It carries out the reaction 2-(5Z,8Z,11Z,14Z-eicosatetraenoyl)-glycerol + H2O = glycerol + (5Z,8Z,11Z,14Z)-eicosatetraenoate + H(+). The enzyme catalyses Hydrolyzes glycerol monoesters of long-chain fatty acids.. The catalysed reaction is 1-decanoylglycerol + H2O = decanoate + glycerol + H(+). It catalyses the reaction 1-dodecanoylglycerol + H2O = dodecanoate + glycerol + H(+). It carries out the reaction 1-tetradecanoylglycerol + H2O = tetradecanoate + glycerol + H(+). The enzyme catalyses 2-hexadecanoylglycerol + H2O = glycerol + hexadecanoate + H(+). The catalysed reaction is 1-(9Z-octadecenoyl)-glycerol + H2O = glycerol + (9Z)-octadecenoate + H(+). It catalyses the reaction 2-(9Z,12Z-octadecadienoyl)-glycerol + H2O = (9Z,12Z)-octadecadienoate + glycerol + H(+). It carries out the reaction 1-(5Z,8Z,11Z,14Z-eicosatetraenoyl)-glycerol + H2O = glycerol + (5Z,8Z,11Z,14Z)-eicosatetraenoate + H(+). The enzyme catalyses 1-(9Z,12Z-octadecadienoyl)-glycerol + H2O = (9Z,12Z)-octadecadienoate + glycerol + H(+). The catalysed reaction is 1-hexadecanoylglycerol + H2O = glycerol + hexadecanoate + H(+). It catalyses the reaction 1-octadecanoylglycerol + H2O = octadecanoate + glycerol + H(+). It carries out the reaction 1-octadecanoyl-2-(9,10-epoxyoctadecanoyl)-sn-glycero-3-phospho-L-serine + H2O = 9,10-epoxyoctadecanoate + 1-octadecanoyl-sn-glycero-3-phosphoserine + H(+). The enzyme catalyses 1-octadecanoyl-2-(10-hydroxyoctadecanoyl)-sn-glycero-3-phospho-L-serine + H2O = 1-octadecanoyl-sn-glycero-3-phosphoserine + 10-hydroxyoctadecanoate + H(+). The catalysed reaction is 1-hexadecanoyl-2-(10-hydroxyoctadecanoyl)-sn-glycero-3-phospho-L-serine + H2O = 10-hydroxyoctadecanoate + 1-hexadecanoyl-sn-glycero-3-phospho-L-serine + H(+). Lysophosphatidylserine (LPS) lipase that mediates the hydrolysis of lysophosphatidylserine, a class of signaling lipids that regulates immunological and neurological processes. Represents a major lysophosphatidylserine lipase in the brain, thereby playing a key role in the central nervous system. Also able to hydrolyze oxidized phosphatidylserine; oxidized phosphatidylserine is produced in response to severe inflammatory stress and constitutes a proapoptotic 'eat me' signal. Also has monoacylglycerol (MAG) lipase activity: hydrolyzes 2-arachidonoylglycerol (2-AG), thereby acting as a regulator of endocannabinoid signaling pathways. Has a strong preference for very-long-chain lipid substrates; substrate specificity is likely due to improved catalysis and not improved substrate binding. In Rattus norvegicus (Rat), this protein is Lysophosphatidylserine lipase ABHD12.